Consider the following 436-residue polypeptide: GTPase Obg (436 aa).

An Obg domain is found at 2 to 160 (SMFLDTAKIQ…RELLLELKVL (159 aa)). Residues 161–338 (ADVGLVGFPS…LLDATAELLD (178 aa)) form the OBG-type G domain. GTP is bound by residues 167 to 174 (GFPSVGKS), 192 to 196 (FTTIV), 214 to 217 (DLPG), 284 to 287 (NKMD), and 319 to 321 (SSL). Ser-174 and Thr-194 together coordinate Mg(2+). The region spanning 358–436 (GFDEEAPAFE…IGKFEFEFVD (79 aa)) is the OCT domain.

The protein belongs to the TRAFAC class OBG-HflX-like GTPase superfamily. OBG GTPase family. In terms of assembly, monomer. Mg(2+) serves as cofactor.

Its subcellular location is the cytoplasm. Its function is as follows. An essential GTPase which binds GTP, GDP and possibly (p)ppGpp with moderate affinity, with high nucleotide exchange rates and a fairly low GTP hydrolysis rate. Plays a role in control of the cell cycle, stress response, ribosome biogenesis and in those bacteria that undergo differentiation, in morphogenesis control. The polypeptide is GTPase Obg (Streptococcus gordonii (strain Challis / ATCC 35105 / BCRC 15272 / CH1 / DL1 / V288)).